The chain runs to 228 residues: Probable septum site-determining protein MinC (228 aa).

It belongs to the MinC family. As to quaternary structure, interacts with MinD and FtsZ.

Its function is as follows. Cell division inhibitor that blocks the formation of polar Z ring septums. Rapidly oscillates between the poles of the cell to destabilize FtsZ filaments that have formed before they mature into polar Z rings. Prevents FtsZ polymerization. In Oceanobacillus iheyensis (strain DSM 14371 / CIP 107618 / JCM 11309 / KCTC 3954 / HTE831), this protein is Probable septum site-determining protein MinC.